The chain runs to 392 residues: S-adenosylmethionine synthase (392 aa).

His-20 contributes to the ATP binding site. Asp-22 is a binding site for Mg(2+). Glu-48 provides a ligand contact to K(+). L-methionine is bound by residues Glu-61 and Gln-106. Residues 106 to 116 form a flexible loop region; it reads QSRDIINAIEK. ATP-binding positions include 171–173, Asp-248, 254–255, Ala-271, and Lys-275; these read DSK and RK. Asp-248 provides a ligand contact to L-methionine. Lys-279 serves as a coordination point for L-methionine.

It belongs to the AdoMet synthase family. In terms of assembly, homotetramer; dimer of dimers. It depends on Mg(2+) as a cofactor. The cofactor is K(+).

It localises to the cytoplasm. The enzyme catalyses L-methionine + ATP + H2O = S-adenosyl-L-methionine + phosphate + diphosphate. The protein operates within amino-acid biosynthesis; S-adenosyl-L-methionine biosynthesis; S-adenosyl-L-methionine from L-methionine: step 1/1. Its function is as follows. Catalyzes the formation of S-adenosylmethionine (AdoMet) from methionine and ATP. The overall synthetic reaction is composed of two sequential steps, AdoMet formation and the subsequent tripolyphosphate hydrolysis which occurs prior to release of AdoMet from the enzyme. This Borreliella burgdorferi (strain ATCC 35210 / DSM 4680 / CIP 102532 / B31) (Borrelia burgdorferi) protein is S-adenosylmethionine synthase.